Here is a 553-residue protein sequence, read N- to C-terminus: MELCTQTVPADHEVEITRRVGSHHPTVWGDHFLAYANLSGASEEEEKQHEDLKEEVRKMLVMAPSNALEKLELINTIQCLGVAYHFEHEIESYMCTHYEEYWIGDLHAIALCFRLLRQQGYRVSCDAYKKFTDDQGNFKIELINDVHGMLSLYEAAQFRVHGEEILDEALNFTTTQLKLILPKLSNSPLAQQVANALKFPIKDGIVRVEARKYISFYQQNQNHNQLLLNFAKLDFNILQMLHKKELCDITRWWKELEIVKTLPYVRDRLAEVYFWSLGVYFEPQYSTARKILTKNISMISLIDDTYDIYGTLDELTLFTEAIERWNIDASEQLQLPSYMKIIYCGLLDVYDEIKKDLANENKSFLINYSIIEMKKMVMAYFQEAKWYYGKTIPKMEEYMKNGISTSAYVQIATTSWLGMGNVATKDSFDWIVNEPPILVASSIIARLLNDLLSHEEEQKRGDAPSGVECYMKEYGVTKEEAHIKIRNTIENSWKDLYEEYFKVNGTIIPRVLLMCIINLARVIEFIYKDEDAYTFPKNNLKDVIYRILIDPII.

Asp303, Asp307, and Glu457 together coordinate Mg(2+). The DDXXD motif signature appears at 303 to 307 (DDTYD).

Belongs to the terpene synthase family. Tpsa subfamily. Requires Mg(2+) as cofactor. It depends on Mn(2+) as a cofactor. Expressed in leaves, trichomes and flowers.

It participates in secondary metabolite biosynthesis; terpenoid biosynthesis. Its function is as follows. Sesquiterpene synthase involved in the biosynthesis of volatile compounds. No activity detected with geranyl diphosphate (GPP) and farnesyl diphosphate (FPP) as substrates. The sequence is that of Terpene synthase 16 from Solanum lycopersicum (Tomato).